The primary structure comprises 88 residues: Mitochondrial import inner membrane translocase subunit Tim10 (88 aa).

Residues 25 to 49 (CSAKCISKYNEGDLNVGESVCAERC) carry the Twin CX3C motif motif. Disulfide bonds link C25–C49 and C29–C45. The disordered stretch occupies residues 63 to 88 (KMSGTQPGQEVPQEAPAAAPEKKGWF). Residues 68–81 (QPGQEVPQEAPAAA) are compositionally biased toward low complexity.

Belongs to the small Tim family. Heterohexamer; composed of 3 copies of timm9 and 3 copies of timm10, named soluble 70 kDa complex. Associates directly with the TIM22 complex, whose core is composed of timm22. Interacts with the transmembrane regions of multi-pass transmembrane proteins in transit.

It is found in the mitochondrion inner membrane. Functionally, component of the TIM22 complex, a complex that mediates the import and insertion of multi-pass transmembrane proteins into the mitochondrial inner membrane. The TIM22 complex forms a twin-pore translocase that uses the membrane potential as external driving force. This is Mitochondrial import inner membrane translocase subunit Tim10 (timm10) from Dictyostelium discoideum (Social amoeba).